The following is a 259-amino-acid chain: Protein YIF1B (259 aa).

Methionine 1 carries the N-acetylmethionine modification. The tract at residues 1-61 (MHATGLAAPA…QPSPGSLGYP (61 aa)) is disordered. Topologically, residues 9-153 (PAGTPRLRKW…APRFDINAPD (145 aa)) are cytoplasmic. Threonine 12 carries the post-translational modification Phosphothreonine. Over residues 14-24 (RLRKWPSKRRV) the composition is skewed to basic residues. The residue at position 64 (serine 64) is a Phosphoserine. The chain crosses the membrane as a helical span at residues 154 to 174 (LYIPAMAFITYILVAGLALGT). The Extracellular segment spans residues 175 to 186 (QDRMIGGVLTGL). The chain crosses the membrane as a helical span at residues 187–207 (LFGKIGYYLVLAWCCVSIFVF). Over 208–237 (MIRTLRLKILAQAAAEGVPVRGARNQLRMY) the chain is Cytoplasmic. The helical transmembrane segment at 238-258 (LTMAVAAAQPVLMYWLTFHLV) threads the bilayer. Position 259 (arginine 259) is a topological domain, extracellular.

Belongs to the YIF1 family. As to quaternary structure, interacts with HTR1A (via C-terminus). Interacts with ABCB9 (via TMD0); this interaction allows (but is not essential) the ER-to-Golgi trafficking and strongly depends on a salt bridge within TMD0. As to expression, highly expressed in brain. Expressed in heart, kidney, and lung and lower levels in spleen, muscle, and intestine (at protein level). Expressed in serotoninergic neurons (at protein level).

The protein localises to the endoplasmic reticulum membrane. The protein resides in the golgi apparatus membrane. It localises to the endoplasmic reticulum-Golgi intermediate compartment membrane. Functions in endoplasmic reticulum to Golgi vesicle-mediated transport and regulates the proper organization of the endoplasmic reticulum and the Golgi. Plays a key role in targeting to neuronal dendrites receptors such as HTR1A. Plays also a role in primary cilium and sperm flagellum assembly probably through protein transport to these compartments. The polypeptide is Protein YIF1B (Rattus norvegicus (Rat)).